A 371-amino-acid polypeptide reads, in one-letter code: Peptide chain release factor 2 (371 aa).

Glutamine 251 is modified (N5-methylglutamine).

This sequence belongs to the prokaryotic/mitochondrial release factor family. In terms of processing, methylated by PrmC. Methylation increases the termination efficiency of RF2.

It localises to the cytoplasm. Peptide chain release factor 2 directs the termination of translation in response to the peptide chain termination codons UGA and UAA. The polypeptide is Peptide chain release factor 2 (Pseudarthrobacter chlorophenolicus (strain ATCC 700700 / DSM 12829 / CIP 107037 / JCM 12360 / KCTC 9906 / NCIMB 13794 / A6) (Arthrobacter chlorophenolicus)).